A 419-amino-acid polypeptide reads, in one-letter code: S-adenosylmethionine synthase (419 aa).

Histidine 15 contacts ATP. Position 17 (aspartate 17) interacts with Mg(2+). Glutamate 43 is a K(+) binding site. Positions 56 and 100 each coordinate L-methionine. A flexible loop region spans residues 100-110 (QSPDIAQGVNE). ATP contacts are provided by residues 171-173 (DGK), 248-249 (KF), aspartate 257, 263-264 (RK), alanine 280, and lysine 284. L-methionine is bound at residue aspartate 257. Residue lysine 288 coordinates L-methionine.

It belongs to the AdoMet synthase family. Homotetramer; dimer of dimers. Mg(2+) serves as cofactor. Requires K(+) as cofactor.

Its subcellular location is the cytoplasm. The catalysed reaction is L-methionine + ATP + H2O = S-adenosyl-L-methionine + phosphate + diphosphate. It participates in amino-acid biosynthesis; S-adenosyl-L-methionine biosynthesis; S-adenosyl-L-methionine from L-methionine: step 1/1. In terms of biological role, catalyzes the formation of S-adenosylmethionine (AdoMet) from methionine and ATP. The overall synthetic reaction is composed of two sequential steps, AdoMet formation and the subsequent tripolyphosphate hydrolysis which occurs prior to release of AdoMet from the enzyme. This Prochlorococcus marinus (strain MIT 9313) protein is S-adenosylmethionine synthase.